The chain runs to 349 residues: tRNA pseudouridine synthase D (349 aa).

Phe26 provides a ligand contact to substrate. Residue Asp79 is the Nucleophile of the active site. Asn128 provides a ligand contact to substrate. The TRUD domain maps to 154 to 303; sequence GVPNYFGSQR…VDAARRAMLV (150 aa). A substrate-binding site is contributed by Phe329.

Belongs to the pseudouridine synthase TruD family.

It carries out the reaction uridine(13) in tRNA = pseudouridine(13) in tRNA. Its function is as follows. Responsible for synthesis of pseudouridine from uracil-13 in transfer RNAs. This chain is tRNA pseudouridine synthase D, found in Erwinia tasmaniensis (strain DSM 17950 / CFBP 7177 / CIP 109463 / NCPPB 4357 / Et1/99).